The sequence spans 335 residues: Pregnancy-specific beta-1-glycoprotein 2 (335 aa).

Positions 1-34 (MGPLSAPPCTEHIKWKGLLVTASLLNFWNLPTTA) are cleaved as a signal peptide. The 110-residue stretch at 35–144 (QVTIEAQPPK…TGYFTFTLYL (110 aa)) folds into the Ig-like V-type domain. Residues asparagine 61, asparagine 104, asparagine 111, and asparagine 199 are each glycosylated (N-linked (GlcNAc...) asparagine). Ig-like C2-type domains follow at residues 147–234 (PKPS…VTLN) and 239–317 (PDLP…TSLT). 2 disulfides stabilise this stretch: cysteine 169-cysteine 217 and cysteine 261-cysteine 301.

This sequence belongs to the immunoglobulin superfamily. CEA family.

Its subcellular location is the secreted. This Homo sapiens (Human) protein is Pregnancy-specific beta-1-glycoprotein 2 (PSG2).